A 163-amino-acid chain; its full sequence is Extracellular giant hemoglobin major globin subunit B2 (163 aa).

The first 16 residues, Met-1–Ala-16, serve as a signal peptide directing secretion. The Globin domain maps to Cys-19–Leu-163. Cys-20 and Cys-151 are oxidised to a cystine. Cys-83 contacts hydrogen sulfide. Residue His-114 coordinates heme b.

The protein belongs to the globin family. In terms of assembly, the 400 kDa hemoglobin consists of a spherical 24-mer arranged as a double layer of dome-shaped dodecamers. Each dodecamer is composed of the 3-fold trimer of the tetramer A1-A2-B1-B2 having one intra-tetramer (A1-B2) disulfide bond and one inter-tetramer (B1-B2) disulfide bond per tetramer.

The protein localises to the secreted. Functionally, the extracellular giant hemoglobin is able to bind and transport oxygen and hydrosulfide simultaneously and reversibly at two different sites. This chain is Extracellular giant hemoglobin major globin subunit B2 (ghbB2), found in Oligobrachia mashikoi (Beard worm).